A 440-amino-acid chain; its full sequence is 6-phospho-alpha-glucosidase (440 aa).

Residue 4–70 participates in NAD(+) binding; the sequence is FSIVVAGGGS…PDINFVYTTD (67 aa). Substrate contacts are provided by Arg-93 and Asn-147. Cys-169 lines the Mn(2+) pocket. Asp-170 acts as the Proton donor in catalysis. His-200 contacts Mn(2+). The Proton acceptor role is filled by Tyr-263. Arg-283 contributes to the substrate binding site.

Belongs to the glycosyl hydrolase 4 family. In terms of assembly, homodimer. NAD(+) serves as cofactor. Requires Mn(2+) as cofactor.

The protein operates within glycan degradation; palatinose degradation. In vitro, readily hydrolyzes p-nitrophenyl-alpha-D-glucopyranoside 6-phosphate (pNPalphaG6P), a chromogenic analog of the phosphorylated isomers of sucrose. In vivo, is probably involved in the degradation of the 6-phosphate derivatives of the sucrose isomers trehalulose, turanose, maltulose and palatinose, catalyzing their hydrolysis into glucose 6-phosphate (G6P) and fructose, which allows the bacterium to use these sugars as energy sources for growth. Is not able to hydrolyze the C2 or C4 chromogenic stereomers (i.e. pNPalpha-mannopyranoside-6P and pNPalpha-galactopyranoside-6P, respectively). This chain is 6-phospho-alpha-glucosidase (pagL), found in Leptotrichia buccalis (strain ATCC 14201 / DSM 1135 / JCM 12969 / NCTC 10249 / C-1013-b).